Consider the following 138-residue polypeptide: Acidic phospholipase A2 Tpu-E6a (138 aa).

A signal peptide spans 1 to 16; that stretch reads MRTLWIMAVLLLGVKG. Disulfide bonds link cysteine 42–cysteine 131, cysteine 44–cysteine 60, cysteine 59–cysteine 111, cysteine 65–cysteine 138, cysteine 66–cysteine 104, cysteine 73–cysteine 97, and cysteine 91–cysteine 102. 3 residues coordinate Ca(2+): tyrosine 43, glycine 45, and glycine 47. Residue histidine 63 is part of the active site. Residue aspartate 64 coordinates Ca(2+). Aspartate 105 is an active-site residue.

In terms of assembly, monomer. Ca(2+) is required as a cofactor. Expressed by the venom gland.

It is found in the secreted. It carries out the reaction a 1,2-diacyl-sn-glycero-3-phosphocholine + H2O = a 1-acyl-sn-glycero-3-phosphocholine + a fatty acid + H(+). In terms of biological role, snake venom phospholipase A2 (PLA2) that impairs hemostasis. It weakly inhibits ADP-induced platelet aggregation when tested on platelet rich plasma from human and rabbit blood (15-25% of inhibition at 5-10 ug of enzyme), and dose-dependently inhibits blood coagulation, possibly by inhibiting thrombin activation. Exhibits high hydrolytic activities toward L-dipalmitoyl phosphatidylcholine. PLA2 catalyzes the calcium-dependent hydrolysis of the 2-acyl groups in 3-sn-phosphoglycerides. This is Acidic phospholipase A2 Tpu-E6a from Craspedocephalus puniceus (Flat-nosed pitviper).